The chain runs to 451 residues: Gamma-aminobutyric acid receptor subunit alpha-2 (451 aa).

The signal sequence occupies residues 1 to 28 (MRTKLSTCNVWFPLLVLLVWNPARLVLA). Residues 29-249 (NIQEDEAKNN…MTAHFHLKRK (221 aa)) lie on the Extracellular side of the membrane. Asparagine 38 carries N-linked (GlcNAc...) asparagine glycosylation. Arginine 94 contacts 4-aminobutanoate. Asparagine 114 and asparagine 138 each carry an N-linked (GlcNAc...) asparagine glycan. Threonine 157 is a 4-aminobutanoate binding site. Cysteine 166 and cysteine 180 are joined by a disulfide. 3 consecutive transmembrane segments (helical) span residues 250 to 270 (IGYF…LSQV), 281 to 300 (ARTV…SISA), and 312 to 332 (AMDW…IEFA). The Cytoplasmic segment spans residues 333–420 (TVNYFTKRGW…FNSVSKIDRM (88 aa)). Residues 389 to 408 (KSATTPEPNKKPENKPAEAK) form a disordered region. Positions 396-408 (PNKKPENKPAEAK) are enriched in basic and acidic residues. The helical transmembrane segment at 421 to 441 (SRIVFPVLFGTFNLVYWATYL) threads the bilayer. The Extracellular portion of the chain corresponds to 442–451 (NREPVLGVSP).

Belongs to the ligand-gated ion channel (TC 1.A.9) family. Gamma-aminobutyric acid receptor (TC 1.A.9.5) subfamily. GABRA2 sub-subfamily. As to quaternary structure, heteropentamer, formed by a combination of alpha (GABRA1-6), beta (GABRB1-3), gamma (GABRG1-3), delta (GABRD), epsilon (GABRE), rho (GABRR1-3), pi (GABRP) and theta (GABRQ) subunits, each subunit exhibiting distinct physiological and pharmacological properties. Binds UBQLN1. Interacts with KIF21B. Interacts with LHFPL4. Interacts with SHISA7; interaction leads to the regulation of GABA(A) receptor trafficking, channel deactivation kinetics and pharmacology. Glycosylated. As to expression, expressed in brain (at protein level).

The protein resides in the postsynaptic cell membrane. It is found in the cell membrane. Its subcellular location is the cytoplasmic vesicle membrane. The protein localises to the cell projection. It localises to the dendrite. It catalyses the reaction chloride(in) = chloride(out). With respect to regulation, activated by pentobarbital. Inhibited by the antagonist bicuculline. Its function is as follows. Alpha subunit of the heteropentameric ligand-gated chloride channel gated by gamma-aminobutyric acid (GABA), a major inhibitory neurotransmitter in the brain. GABA-gated chloride channels, also named GABA(A) receptors (GABAAR), consist of five subunits arranged around a central pore and contain GABA active binding site(s) located at the alpha and beta subunit interface(s). When activated by GABA, GABAARs selectively allow the flow of chloride anions across the cell membrane down their electrochemical gradient. Chloride influx into the postsynaptic neuron following GABAAR opening decreases the neuron ability to generate a new action potential, thereby reducing nerve transmission. The alpha-2 subunit exhibits synaptogenic activity together with beta-2 and very little to no activity together with beta-3, the gamma-2 subunit being necessary but not sufficient to induce rapid synaptic contacts formation. This Rattus norvegicus (Rat) protein is Gamma-aminobutyric acid receptor subunit alpha-2.